The primary structure comprises 712 residues: Testis-specific gene 10 protein (712 aa).

A Phosphoserine modification is found at S161. Residues Q571 to L703 form an interaction with HIF1A region. A disordered region spans residues Y673–L699. A compositionally biased stretch (basic and acidic residues) spans H685 to L699. At S702 the chain carries Phosphoserine.

The protein belongs to the CEP135/TSGA10 family. As to quaternary structure, interacts with HIF1A. In terms of processing, processed into N-terminal 27-kDa and C-terminal 55-kDa fragments. In terms of tissue distribution, expressed in testis, predominantly in elongated spermatids (at protein level). Detected in spermatocytes only at the mRNA, but not at the protein level.

It is found in the cytoplasm. The protein resides in the cytoskeleton. The protein localises to the microtubule organizing center. Its subcellular location is the centrosome. It localises to the centriole. Functionally, plays a role in spermatogenesis. When overexpressed, prevents nuclear localization of HIF1A. The sequence is that of Testis-specific gene 10 protein (Tsga10) from Rattus norvegicus (Rat).